Consider the following 587-residue polypeptide: MLWKRTCTRLIKPIAQPRGRLVRRSCYRYASTGTGSTDSSSQWLKYSVIASSATLFGYLFAKNLYSRETKEDLIEKLEMVKKIDPVNSTLKLSSLDSPDYLHDPVKIDKVVEDLKQVLGNKPENYSDAKSDLDAHSDTYFNTHHPSPEQRPRIILFPHTTEEVSKILKICHDNNMPVVPFSGGTSLEGHFLPTRIGDTITVDLSKFMNNVVKFDKLDLDITVQAGLPWEDLNDYLSDHGLMFGCDPGPGAQIGGCIANSCSGTNAYRYGTMKENIINMTIVLPDGTIVKTKKRPRKSSAGYNLNGLFVGSEGTLGIVTEATVKCHVKPKAETVAVVSFDTIKDAAACASNLTQSGIHLNAMELLDENMMKLINASESTDRCDWVEKPTMFFKIGGRSPNIVNALVDEVKAVAQLNHCNSFQFAKDDDEKLELWEARKVALWSVLDADKSKDKSAKIWTTDVAVPVSQFDKVIHETKKDMQASKLINAIVGHAGDGNFHAFIVYRTPEEHETCSQLVDRMVKRALNAEGTCTGEHGVGIGKREYLLEELGEAPVDLMRKIKLAIDPKRIMNPDKIFKTDPNEPANDYR.

The FAD-binding PCMH-type domain maps to 146–327 (SPEQRPRIIL…TEATVKCHVK (182 aa)).

Belongs to the FAD-binding oxidoreductase/transferase type 4 family. FAD is required as a cofactor.

It localises to the mitochondrion inner membrane. It carries out the reaction (R)-lactate + 2 Fe(III)-[cytochrome c] = 2 Fe(II)-[cytochrome c] + pyruvate + 2 H(+). Functionally, catalyzes the stereospecific oxidation of D-lactate to pyruvate. The polypeptide is D-lactate dehydrogenase [cytochrome] 1, mitochondrial (Saccharomyces cerevisiae (strain ATCC 204508 / S288c) (Baker's yeast)).